The primary structure comprises 587 residues: Kelch-like ECH-associated protein 1B (587 aa).

Positions 44-117 (CDVTLRVRYC…AYTASISVGE (74 aa)) constitute a BTB domain. One can recognise a BACK domain in the interval 153 to 253 (IGIASFAEQI…LTPHFLQRQL (101 aa)). Kelch repeat units follow at residues 292-337 (LIYT…VISG), 338-388 (LLYA…VIDG), 389-435 (MIYA…VINR), 436-482 (LLYA…ALGN), 484-529 (IYVM…THHG), and 530-576 (RIYV…VTME).

It belongs to the KEAP1 family. In terms of assembly, homodimer and heterodimer; heterodimerizes with keap1a. Component of the BCR(KEAP1) E3 ubiquitin ligase complex, at least composed of 2 molecules of cul3, 2 molecules of keap1 (keap1a and/or keap1b), and rbx1. Interacts with nfe2l2/nrf2; the interaction is direct. Non-enzymatic covalent modifications of reactive cysteines by electrophile metabolites inactivate the BCR(KEAP1) complex. As to expression, widely expressed.

It localises to the cytoplasm. The protein resides in the nucleus. It functions in the pathway protein modification; protein ubiquitination. Ubiquitin ligase activity of the BCR(KEAP1) complex is inhibited by oxidative stress and electrophile metabolites such as sulforaphane. Electrophile metabolites react with reactive cysteine residues in keap1 and trigger non-enzymatic covalent modifications of these cysteine residues, leading to inactivate the ubiquitin ligase activity of the BCR(KEAP1) complex. In terms of biological role, substrate-specific adapter of a BCR (BTB-CUL3-RBX1) E3 ubiquitin ligase complex that regulates the response to oxidative stress by targeting nfe2l2/nrf2 for ubiquitination. Keap1 acts as a key sensor of oxidative and electrophilic stress: in normal conditions, the BCR(KEAP1) complex mediates ubiquitination and degradation of nfe2l2/nrf2, a transcription factor regulating expression of many cytoprotective genes. In response to oxidative stress, different electrophile metabolites trigger non-enzymatic covalent modifications of highly reactive cysteine residues in KEAP1, leading to inactivate the ubiquitin ligase activity of the BCR(KEAP1) complex, promoting nfe2l2/nrf2 nuclear accumulation and expression of phase II detoxifying enzymes. The sequence is that of Kelch-like ECH-associated protein 1B from Danio rerio (Zebrafish).